The following is a 697-amino-acid chain: Sentrin-specific protease (697 aa).

The span at 1–14 shows a compositional bias: basic and acidic residues; sequence MSRRSDLSDKDSQS. 2 disordered regions span residues 1–47 and 365–387; these read MSRR…QGLG and SEES…SDSY. Residues 15-19 carry the Nuclear localization signal motif; it reads RKRHW. A Nuclear localization signal motif is present at residues 462–467; sequence KVEKKK. Positions 501–664 are protease; that stretch reads IQICKKDLAT…VFSCQFGEWA (164 aa). Residues His585, Asp602, and Cys653 contribute to the active site.

It belongs to the peptidase C48 family.

The protein resides in the nucleus envelope. Protease that deconjugates smo-1 from targeted proteins and may catalyze the processing of smo-1 to its mature form. This chain is Sentrin-specific protease (ulp-1), found in Caenorhabditis elegans.